Reading from the N-terminus, the 241-residue chain is MDSDIMNMMMHQMEKLPEFCNPNSSFFSPDHNNTYPFLFNSTHYQSDHSMTNEPGFRYGSGLLTNPSSISPNTAYSSVFLDKRNNSNNNNNGTNMAAMREMIFRIAVMQPIHIDPEAVKPPKRRNVRISKDPQSVAARHRRERISERIRILQRLVPGGTKMDTASMLDEAIHYVKFLKKQVQSLEEQAVVTGGGGGGGGRVLIGGGGMTAASGGGGGGGVVMKGCGTVGTHQMVGNAQILR.

The bHLH domain maps to 128–177 (ISKDPQSVAARHRRERISERIRILQRLVPGGTKMDTASMLDEAIHYVKFL).

As to quaternary structure, homodimer. Interacts with SPT. Interacts with BZIP30. In terms of tissue distribution, flowers, especially in gynoecium.

Its subcellular location is the nucleus. Its function is as follows. Required for the female reproductive tract development and fertility. The sequence is that of Transcription factor HEC1 (HEC1) from Arabidopsis thaliana (Mouse-ear cress).